The primary structure comprises 616 residues: Adenylosuccinate synthetase 2 (616 aa).

Residues 1–26 form a disordered region; it reads MDKQAERDQSAGPVKTPQETQPPAHN. Positions 17–26 are enriched in polar residues; that stretch reads PQETQPPAHN. GTP-binding positions include 87 to 93 and 117 to 119; these read GDEGKGK and GHT. Asp88 serves as the catalytic Proton acceptor. Asp88 and Gly117 together coordinate Mg(2+). IMP is bound by residues 88–91, 115–118, Thr202, Lys216, Gln328, Thr343, and Lys472; these read DEGK and NAGH. His118 acts as the Proton donor in catalysis. Residue 468-474 coordinates substrate; it reads AVTKKPR. Residues Arg474 and 603 to 605 contribute to the GTP site; that span reads GNG.

The protein belongs to the adenylosuccinate synthetase family. In terms of assembly, homodimer. Mg(2+) is required as a cofactor.

Its subcellular location is the cytoplasm. The catalysed reaction is IMP + L-aspartate + GTP = N(6)-(1,2-dicarboxyethyl)-AMP + GDP + phosphate + 2 H(+). The protein operates within purine metabolism; AMP biosynthesis via de novo pathway; AMP from IMP: step 1/2. Plays an important role in the salvage pathway for purine nucleotide biosynthesis. Catalyzes the first committed step in the biosynthesis of AMP from IMP. In Trypanosoma cruzi (strain CL Brener), this protein is Adenylosuccinate synthetase 2.